A 274-amino-acid chain; its full sequence is ATP synthase subunit a (274 aa).

5 helical membrane-spanning segments follow: residues 43-63 (TLNI…LFVF), 103-123 (VIAP…MMDL), 149-169 (DVSI…FYSI), 223-243 (LIFI…LSLP), and 245-265 (AIFH…LTIV).

Belongs to the ATPase A chain family. In terms of assembly, F-type ATPases have 2 components, CF(1) - the catalytic core - and CF(0) - the membrane proton channel. CF(1) has five subunits: alpha(3), beta(3), gamma(1), delta(1), epsilon(1). CF(0) has three main subunits: a(1), b(2) and c(9-12). The alpha and beta chains form an alternating ring which encloses part of the gamma chain. CF(1) is attached to CF(0) by a central stalk formed by the gamma and epsilon chains, while a peripheral stalk is formed by the delta and b chains.

It localises to the cell inner membrane. Functionally, key component of the proton channel; it plays a direct role in the translocation of protons across the membrane. This chain is ATP synthase subunit a, found in Yersinia enterocolitica serotype O:8 / biotype 1B (strain NCTC 13174 / 8081).